Reading from the N-terminus, the 513-residue chain is Prostaglandin E2 receptor EP4 subtype (513 aa).

Residues 1-44 are Extracellular-facing; the sequence is MAEVGGTIPRSNRELQRCVLLTTTIMSIPGVNASFSSTPERLNS. Asn-32 carries N-linked (GlcNAc...) asparagine glycosylation. Residues 45 to 68 form a helical membrane-spanning segment; it reads PVTIPAVMFIFGVVGNLVAIVVLC. At 69-80 the chain is on the cytoplasmic side; it reads KSRKEQKETTFY. The helical transmembrane segment at 81–104 threads the bilayer; sequence TLVCGLAVTDLLGTLLVSPVTIAT. Topologically, residues 105–121 are extracellular; the sequence is YMKGQWPGDQALCDYST. Cys-117 and Cys-195 are oxidised to a cystine. Residues 122-140 traverse the membrane as a helical segment; sequence FILLFFGLSGLSIICAMSI. Over 141–160 the chain is Cytoplasmic; that stretch reads ERYLAINHAYFYSHYVDKRL. Residues 161–185 traverse the membrane as a helical segment; that stretch reads AGLTLFAIYASNVLFCALPNMGLGR. The Extracellular portion of the chain corresponds to 186 to 209; sequence SERQYPGTWCFIDWTTNVTAYAAF. A helical membrane pass occupies residues 210–236; sequence SYMYAGFSSFLILATVLCNVLVCGALL. Residues 237-295 lie on the Cytoplasmic side of the membrane; it reads RMHRQFMRRTSLGTEQHHAAAAAAVASVACRGHAGASPALQRLSDFRRRRSFRRIAGAE. A helical membrane pass occupies residues 296–323; the sequence is IQMVILLIATSLVVLICSIPLVVRVFIN. The Extracellular segment spans residues 324 to 340; the sequence is QLYQPNVVKDISRNPDL. A helical membrane pass occupies residues 341–360; sequence QAIRIASVNPILDPWIYILL. Residues 361–513 are Cytoplasmic-facing; it reads RKTVLSKAIE…ETLKLSEKCI (153 aa). Residues 383 to 403 form a disordered region; the sequence is GRDSSAQHCSESRRTSSAMSG. The segment covering 384 to 403 has biased composition (polar residues); that stretch reads RDSSAQHCSESRRTSSAMSG. Phosphoserine is present on residues Ser-402, Ser-405, and Ser-407.

This sequence belongs to the G-protein coupled receptor 1 family. Interacts with FEM1A. In terms of processing, phosphorylation mediates agonist-mediated desensitization by promoting cytoplasmic retention. In terms of tissue distribution, abundant expression in ileum, thymus and mastocytoma P-815 cells. Also observed in lung, spleen, heart and uterus.

Its subcellular location is the cell membrane. Its function is as follows. Receptor for prostaglandin E2 (PGE2). The activity of this receptor is mediated by G(s) proteins that stimulate adenylate cyclase. Has a relaxing effect on smooth muscle. May play an important role in regulating renal hemodynamics, intestinal epithelial transport, adrenal aldosterone secretion, and uterine function. The chain is Prostaglandin E2 receptor EP4 subtype (Ptger4) from Mus musculus (Mouse).